The chain runs to 722 residues: MPSPQTDTPGPELQSPKEAEEPQTPAQGSRRTSSRKEPNAHRKDGTRLGLGSLRQAFSRASQRALTQVSKEDTGLFRRSSCSLFRSFRQALNDGPATGHSQATPEVPSGVMNGVSQQASTGAASEELKPEAEGKSVADLITERQLLAAFEQLLRLETLLVAEKASRTFEQDPTAFARRAMDVCLLYDGLAAEIGAIVRETLDSDGVDAAALAELARVVSAEEEAHPSPPDDGDFLRTPRRWRQHWEEAVRRSAQERVRRPGAGWAFGEAEGASGLAQLLAELGGLVRRDLQKVRQEVQPAYAAAGFPAWEVYLRAFHSAVAQRLQELARDARGCEQLYILLDWAANVYGSPDFLGAPGLALPAEPLPPLLAPDVWARLESDYTSFLEAKIASCFDSILQLEQSHWAAAEVPEVLQGLYQAPLSMDVHMLVAEHVKAAGAISAELEATTLRICTRALGLFVPRFEKAFLASEAVSEPHLGAYINACEELRTSLLSRFPGTQEELEKPLVTATCSFQKHLLQGLQRELQPLFRVVCTRDWLTQDWLHPLMDKVVTFAGHLQRVARPRAQETLQEVHRFVVREYLARALRPRERFRGMERMHGSQKMSLDAQAISDTFQGLGSEATWLDQAIQCVAEILGETYKDDIQRHLETLIRSYPDIRRDHILAILALRRLGRQRNQHLLQHTQDLLRAAAGAAGAEAPRGRVLFEEIKVPSAMAVLITCV.

Disordered regions lie at residues 1-53 (MPSP…LGSL) and 92-131 (NDGP…KPEA). The segment covering 34 to 46 (SRKEPNAHRKDGT) has biased composition (basic and acidic residues). At serine 52 the chain carries Phosphoserine. Residues 113–122 (GVSQQASTGA) are compositionally biased toward polar residues. Serine 513 bears the Phosphoserine mark.

It belongs to the SEC6 family.

This chain is Exocyst complex component 3-like protein 4 (EXOC3L4), found in Homo sapiens (Human).